Consider the following 291-residue polypeptide: MVREQYTTATEGICIERPENQYVYKIGIYGWRKRCLYLFVLLLLIILVVNLALTIWILKVMWFSPAGMGHLCVTKDGLRLEGESEFLFPLYAKEIHSRVDSSLLLQSTQNVTVNARNSEGEVTGRLKVGPKMVEVQNQQFQINSNDGKPLFTVDEKEVVVGTDKLRVTGPEGALFEHSVETPLVRADPFQDLRLESPTRSLSMDAPRGVHIQAHAGKIEALSQMDILFHSSDGMLVLDAETVCLPKLVQGTWGPSGSSQSLYEICVCPDGKLYLSVAGVSTTCQEHNHICL.

Residues 1–37 are Cytoplasmic-facing; the sequence is MVREQYTTATEGICIERPENQYVYKIGIYGWRKRCLY. The chain crosses the membrane as a helical; Signal-anchor for type II membrane protein span at residues 38 to 58; that stretch reads LFVLLLLIILVVNLALTIWIL. Residues 59–291 are Extracellular-facing; it reads KVMWFSPAGM…TCQEHNHICL (233 aa). Asn110 carries N-linked (GlcNAc...) asparagine glycosylation. Disulfide bonds link Cys265-Cys290 and Cys267-Cys283.

Belongs to the sarcoglycan beta/delta/gamma/zeta family. As to quaternary structure, interacts with the syntrophin SNTA1. Cross-link to form 2 major subcomplexes: one consisting of SGCB, SGCD and SGCG and the other consisting of SGCB and SGCD. The association between SGCB and SGCG is particularly strong while SGCA is loosely associated with the other sarcoglycans. Interacts with FLNC. As to expression, expressed in skeletal and heart muscle.

Its subcellular location is the cell membrane. The protein resides in the sarcolemma. It localises to the cytoplasm. It is found in the cytoskeleton. In terms of biological role, component of the sarcoglycan complex, a subcomplex of the dystrophin-glycoprotein complex which forms a link between the F-actin cytoskeleton and the extracellular matrix. The polypeptide is Gamma-sarcoglycan (SGCG) (Homo sapiens (Human)).